A 429-amino-acid chain; its full sequence is MSAKLFRLDAGYQQYDWGKIGSSSAVAQYAANSDPSVQIEEDKPYAELWMGTHHKVPSRHHDTKVALSDLIAANPEGMLGSGNVEKFHSRKDLPFLFKVLSIEKVLSIQAHPDKNLGRRLHIQDPKNYPDDNHKPEMAIAISDFEGFCGFKPLEELAEELQRIPEFRSLVGEDIAAQFCAGIKVGAQEGSEEDKSNRKLLQSVFSNVMNASDDVIASHARHLVERAKQSPADFNNETLPALILRLNEQFPEDVGLFCGCLMLNHCVLKAGESIFLRAKDPHAYITGDIIECMAASDNVVRAGFTPKFKDVKNLVEMLTYSYDSVEDQKMKLLPFARSSGSGDSILYNPPIEEFAVLQTNFHGSTGTHHFDGLDGPSIVITTNGSGYIQSGDVRLKAEAGYVFFIAPHAEVDLQTEDSNFTTYRAFVEPN.

Positions 109, 111, 136, and 281 each coordinate Zn(2+). Residue Arg300 is part of the active site.

The protein belongs to the mannose-6-phosphate isomerase type 1 family. It depends on Zn(2+) as a cofactor.

It localises to the cytoplasm. The enzyme catalyses D-mannose 6-phosphate = D-fructose 6-phosphate. It participates in nucleotide-sugar biosynthesis; GDP-alpha-D-mannose biosynthesis; alpha-D-mannose 1-phosphate from D-fructose 6-phosphate: step 1/2. Functionally, involved in the synthesis of the GDP-mannose and dolichol-phosphate-mannose required for a number of critical mannosyl transfer reactions. The chain is Mannose-6-phosphate isomerase (PMI1) from Eremothecium gossypii (strain ATCC 10895 / CBS 109.51 / FGSC 9923 / NRRL Y-1056) (Yeast).